We begin with the raw amino-acid sequence, 394 residues long: Putative nickel insertion protein (394 aa).

This sequence belongs to the LarC family.

The protein is Putative nickel insertion protein of Syntrophotalea carbinolica (strain DSM 2380 / NBRC 103641 / GraBd1) (Pelobacter carbinolicus).